The primary structure comprises 1340 residues: Early transcription factor large subunit homolog (1340 aa).

It localises to the virion. In terms of biological role, putative initation factor. This is Early transcription factor large subunit homolog from Ornithodoros (relapsing fever ticks).